The sequence spans 164 residues: MFSMVTEFMNYSQQTVRAARYIGQGFMITLSHASRLPVTIQYPYEKLITSERFRGRIHFEFDKCIACEVCVRVCPIDLPVVDWKLEKDIRKKRLLNYSIDFGICIFCGNCVEYCPTNCLSMTEEYELSTYDRHELNYNQIALGRLPMSIINDYTTRTILNLPMK.

2 4Fe-4S ferredoxin-type domains span residues 55–84 (GRIHFEFDKCIACEVCVRVCPIDLPVVDWK) and 95–124 (LNYSIDFGICIFCGNCVEYCPTNCLSMTEE). Residues C64, C67, C70, C74, C104, C107, C110, and C114 each contribute to the [4Fe-4S] cluster site.

It belongs to the complex I 23 kDa subunit family. In terms of assembly, NDH is composed of at least 16 different subunits, 5 of which are encoded in the nucleus. Requires [4Fe-4S] cluster as cofactor.

It localises to the plastid. The protein localises to the chloroplast thylakoid membrane. It catalyses the reaction a plastoquinone + NADH + (n+1) H(+)(in) = a plastoquinol + NAD(+) + n H(+)(out). It carries out the reaction a plastoquinone + NADPH + (n+1) H(+)(in) = a plastoquinol + NADP(+) + n H(+)(out). NDH shuttles electrons from NAD(P)H:plastoquinone, via FMN and iron-sulfur (Fe-S) centers, to quinones in the photosynthetic chain and possibly in a chloroplast respiratory chain. The immediate electron acceptor for the enzyme in this species is believed to be plastoquinone. Couples the redox reaction to proton translocation, and thus conserves the redox energy in a proton gradient. This Daucus carota (Wild carrot) protein is NAD(P)H-quinone oxidoreductase subunit I, chloroplastic.